The following is a 953-amino-acid chain: Serine/threonine-protein kinase ppk30 (953 aa).

The 270-residue stretch at 57–326 (VIIQRYLSEG…IYQTLKEIME (270 aa)) folds into the Protein kinase domain. Residues 63-71 (LSEGGFSHV) and Lys-85 each bind ATP. The active-site Proton acceptor is Asp-187. Disordered stretches follow at residues 343-402 (ASTY…PSVS), 427-451 (SPIPATKSYSATIQTPRSPSLRRAD), 538-606 (RFLP…NRMN), 641-669 (RKEPFTPAVPSAKSGLKKDQSSEVANKDV), 748-791 (STSQ…RPIG), and 864-953 (RKSC…ESLE). Polar residues-rich tracts occupy residues 355 to 369 (RTPSGSLTPLSSRPA), 378 to 402 (TVQTTSSNVPPVNRPSLKSKSPSVS), and 433 to 444 (KSYSATIQTPRS). Residues 547–557 (PSEFSSSVGSK) show a composition bias toward low complexity. The segment covering 558–575 (QNLSMDIPSVQNVSTKQK) has biased composition (polar residues). Residues 656–669 (LKKDQSSEVANKDV) show a composition bias toward basic and acidic residues. A compositionally biased stretch (polar residues) spans 748–766 (STSQVSHTQRLQQSISTSL). Composition is skewed to basic and acidic residues over residues 767-778 (ERVKSNTKKESN), 865-884 (KSCETQRSRKSHEGSNDLER), and 937-953 (PHIERLNLFHTKSESLE). Phosphoserine is present on residues Ser-872 and Ser-875.

It belongs to the protein kinase superfamily. Ser/Thr protein kinase family.

The protein localises to the cytoplasm. It catalyses the reaction L-seryl-[protein] + ATP = O-phospho-L-seryl-[protein] + ADP + H(+). The enzyme catalyses L-threonyl-[protein] + ATP = O-phospho-L-threonyl-[protein] + ADP + H(+). The chain is Serine/threonine-protein kinase ppk30 (ppk30) from Schizosaccharomyces pombe (strain 972 / ATCC 24843) (Fission yeast).